We begin with the raw amino-acid sequence, 239 residues long: Large ribosomal subunit protein uL1 (239 aa).

The protein belongs to the universal ribosomal protein uL1 family. Part of the 50S ribosomal subunit.

Functionally, binds directly to 23S rRNA. The L1 stalk is quite mobile in the ribosome, and is involved in E site tRNA release. Its function is as follows. Protein L1 is also a translational repressor protein, it controls the translation of the L11 operon by binding to its mRNA. In Rickettsia conorii (strain ATCC VR-613 / Malish 7), this protein is Large ribosomal subunit protein uL1.